The sequence spans 228 residues: ATP synthase F(0) complex subunit a (228 aa).

The next 6 membrane-spanning stretches (helical) occupy residues 13–33 (YFLG…TMFI), 70–90 (WALL…TGLL), 100–120 (LSLN…MGAT), 140–160 (APFL…ALGV), 162–182 (LTAN…ALIN), and 190–210 (LFLT…VSFI).

The protein belongs to the ATPase A chain family. As to quaternary structure, component of the ATP synthase complex composed at least of ATP5F1A/subunit alpha, ATP5F1B/subunit beta, ATP5MC1/subunit c (homooctomer), MT-ATP6/subunit a, MT-ATP8/subunit 8, ATP5ME/subunit e, ATP5MF/subunit f, ATP5MG/subunit g, ATP5MK/subunit k, ATP5MJ/subunit j, ATP5F1C/subunit gamma, ATP5F1D/subunit delta, ATP5F1E/subunit epsilon, ATP5PF/subunit F6, ATP5PB/subunit b, ATP5PD/subunit d, ATP5PO/subunit OSCP. ATP synthase complex consists of a soluble F(1) head domain (subunits alpha(3) and beta(3)) - the catalytic core - and a membrane F(0) domain - the membrane proton channel (subunits c, a, 8, e, f, g, k and j). These two domains are linked by a central stalk (subunits gamma, delta, and epsilon) rotating inside the F1 region and a stationary peripheral stalk (subunits F6, b, d, and OSCP). Interacts with DNAJC30; interaction is direct.

Its subcellular location is the mitochondrion inner membrane. It catalyses the reaction H(+)(in) = H(+)(out). In terms of biological role, subunit a, of the mitochondrial membrane ATP synthase complex (F(1)F(0) ATP synthase or Complex V) that produces ATP from ADP in the presence of a proton gradient across the membrane which is generated by electron transport complexes of the respiratory chain. ATP synthase complex consist of a soluble F(1) head domain - the catalytic core - and a membrane F(1) domain - the membrane proton channel. These two domains are linked by a central stalk rotating inside the F(1) region and a stationary peripheral stalk. During catalysis, ATP synthesis in the catalytic domain of F(1) is coupled via a rotary mechanism of the central stalk subunits to proton translocation. With the subunit c (ATP5MC1), forms the proton-conducting channel in the F(0) domain, that contains two crucial half-channels (inlet and outlet) that facilitate proton movement from the mitochondrial intermembrane space (IMS) into the matrix. Protons are taken up via the inlet half-channel and released through the outlet half-channel, following a Grotthuss mechanism. This chain is ATP synthase F(0) complex subunit a, found in Myxine glutinosa (Atlantic hagfish).